Consider the following 788-residue polypeptide: Endonuclease MutS2 (788 aa).

Position 332–339 (332–339 (GPNTGGKT)) interacts with ATP. Residues 713-788 (IDLRGLDSEE…GTGVTVVELK (76 aa)) form the Smr domain.

Belongs to the DNA mismatch repair MutS family. MutS2 subfamily. As to quaternary structure, homodimer. Binds to stalled ribosomes, contacting rRNA.

Its function is as follows. Endonuclease that is involved in the suppression of homologous recombination and thus may have a key role in the control of bacterial genetic diversity. Functionally, acts as a ribosome collision sensor, splitting the ribosome into its 2 subunits. Detects stalled/collided 70S ribosomes which it binds and splits by an ATP-hydrolysis driven conformational change. Acts upstream of the ribosome quality control system (RQC), a ribosome-associated complex that mediates the extraction of incompletely synthesized nascent chains from stalled ribosomes and their subsequent degradation. Probably generates substrates for RQC. The sequence is that of Endonuclease MutS2 from Clostridium acetobutylicum (strain ATCC 824 / DSM 792 / JCM 1419 / IAM 19013 / LMG 5710 / NBRC 13948 / NRRL B-527 / VKM B-1787 / 2291 / W).